Here is a 590-residue protein sequence, read N- to C-terminus: Protein NRT1/ PTR FAMILY 6.3 (590 aa).

Helical transmembrane passes span 46 to 66 (LTTLGIGVNLVTYLTGTMHLG) and 77 to 97 (FLGTSFMLCLLGGFIADTFLG). At threonine 101 the chain carries Phosphothreonine; by CIPK23. The next 10 membrane-spanning stretches (helical) occupy residues 102 to 122 (IAIFAAIQATGVSILTLSTII), 143 to 163 (GIQLTVLYLALYLTALGTGGV), 193 to 213 (FFFCINVGSLLAVTVLVYVQD), 219 to 239 (WGYGICAFAIVLALSVFLAGT), 342 to 362 (MLPIWATCILFWTVHAQLTTL), 374 to 394 (IGSFEIPPASMAVFYVGGLLL), 423 to 443 (IGLGLFFGSMAMAVAALVELK), 460 to 480 (LGFYLLIPQYLIVGIGEALIY), 501 to 521 (GLLLSTLALGFFFSSVLVTIV), and 542 to 562 (YNFYWLVAVLVALNFLIFLVF). Residues histidine 356 and threonine 360 each contribute to the substrate site.

It belongs to the major facilitator superfamily. Proton-dependent oligopeptide transporter (POT/PTR) (TC 2.A.17) family. Monomer and homodimer. The dimer has the 2 monomers in the same orientation. Interacts with CIPK23. Post-translationally, acts as a high-affinity nitrate transporter when phosphorylated and as a low-affinity transporter when dephosphorylated. Forms homodimer when unphosphorylated and monomer when phosphorylated. Low nitrogen concentration in the medium stimulates phosphorylation. Phosphorylation also regulates the nitrate signaling. Expressed in the stele in lateral root primordia before emergence and in the tip of primary and emerged lateral roots. Detected in emerging and immature leaves, guard cells, flower buds, style, stigma, anthers and pollen grains. Not detected in the shoot apical meristem.

The protein resides in the membrane. Its function is as follows. Dual affinity nitrate transporter. Involved in proton-dependent nitrate uptake and in the regulation of the nitrate transporter NRT2.1. Also acts as a nitrate sensor that trigger a specific signaling pathway stimulating lateral root growth and seed germination. The uptake activity is not required for sensor function. Displays an auxin transport facilitation inhibited by high nitrate concentration. Required to prevent auxin accumulation in preemerged lateral root primordia and young lateral roots when external nitrate concentration is low or null. May be involved in the basipetal transport of auxin out of the lateral root tips. Acts as a bidirectional transporter involved in root-to-shoot nitrate translocation. Recognizes specifically nitrate and chlorate, but not nitrite, alanine, sulfate, phosphate or the di-peptide Ala-Ala. In Arabidopsis thaliana (Mouse-ear cress), this protein is Protein NRT1/ PTR FAMILY 6.3 (NPF6.3).